A 474-amino-acid chain; its full sequence is Glycogen synthase (474 aa).

Lysine 15 provides a ligand contact to ADP-alpha-D-glucose.

The protein belongs to the glycosyltransferase 1 family. Bacterial/plant glycogen synthase subfamily.

It catalyses the reaction [(1-&gt;4)-alpha-D-glucosyl](n) + ADP-alpha-D-glucose = [(1-&gt;4)-alpha-D-glucosyl](n+1) + ADP + H(+). The protein operates within glycan biosynthesis; glycogen biosynthesis. Functionally, synthesizes alpha-1,4-glucan chains using ADP-glucose. This Chlamydia trachomatis serovar D (strain ATCC VR-885 / DSM 19411 / UW-3/Cx) protein is Glycogen synthase.